Reading from the N-terminus, the 252-residue chain is Ubiquinone biosynthesis O-methyltransferase (252 aa).

S-adenosyl-L-methionine contacts are provided by arginine 41, glycine 72, aspartate 93, and methionine 136.

The protein belongs to the methyltransferase superfamily. UbiG/COQ3 family.

The catalysed reaction is a 3-demethylubiquinol + S-adenosyl-L-methionine = a ubiquinol + S-adenosyl-L-homocysteine + H(+). It catalyses the reaction a 3-(all-trans-polyprenyl)benzene-1,2-diol + S-adenosyl-L-methionine = a 2-methoxy-6-(all-trans-polyprenyl)phenol + S-adenosyl-L-homocysteine + H(+). The protein operates within cofactor biosynthesis; ubiquinone biosynthesis. Its function is as follows. O-methyltransferase that catalyzes the 2 O-methylation steps in the ubiquinone biosynthetic pathway. The chain is Ubiquinone biosynthesis O-methyltransferase from Rhizobium leguminosarum bv. trifolii (strain WSM2304).